A 709-amino-acid polypeptide reads, in one-letter code: Glycerol kinase (709 aa).

Substrate is bound at residue threonine 56. Arginine 60 is an ATP binding site. The disordered stretch occupies residues 86-110 (KIGVSGLRRPSTAPARETPNAGDIK). Residues arginine 201, tyrosine 258, and aspartate 386 each coordinate substrate. Residues threonine 408, glycine 463, and 584–588 (GMSRS) each bind ATP.

This sequence belongs to the FGGY kinase family.

The enzyme catalyses glycerol + ATP = sn-glycerol 3-phosphate + ADP + H(+). It functions in the pathway polyol metabolism; glycerol degradation via glycerol kinase pathway; sn-glycerol 3-phosphate from glycerol: step 1/1. Functionally, key enzyme in the regulation of glycerol uptake and metabolism. Catalyzes the phosphorylation of glycerol to yield sn-glycerol 3-phosphate. This is Glycerol kinase (GUT1) from Saccharomyces cerevisiae (strain ATCC 204508 / S288c) (Baker's yeast).